Reading from the N-terminus, the 519-residue chain is MAKPKKTPRPKAQTPKGFRDYFGAEVSQRAEMLQRIAGVYHRYGFDALESSGVETVEALGKFLPDVDRPNEGVFAWQEDADADKPGDWLALRYDLTAPLARVYAQHQNDLPKPYRRYAMGPVWRNEKPGPGRFRQFYQCDADTVGASSVAADAEICAMLCDCLEAVGIERGDYVVRINNRKVLNGVLEVIGALGDEPRLSQHFQEMAENLGKKMTAAKVGIVLRTIDKLDRLGKEGVRSLLGPGRKDESGDLTFGADLSKAQIDVVMSFLEAKGGTNSETLINLREIVGRSRIGKEGVDELEKISELLSAGSYGPDRIVIDPSVVRGLGYYTGPVYEAELTFEIQDDKGRTRNFGSVAGGGRYDDLVKRFTGQEVPATGVSIGVDRLLAALHAKGRLDTTDVGPVVVTVMDRDRMADYQAMVAELRQAGIRAEVYLGNPKNFGNQLKYADTRNSPVAVIEGGDEHEKGVVQIKDLILGAEIAKSATLEEWKDRPSQFEVPRAELVAKVREILAQHGLEK.

Belongs to the class-II aminoacyl-tRNA synthetase family. In terms of assembly, homodimer.

The protein resides in the cytoplasm. It carries out the reaction tRNA(His) + L-histidine + ATP = L-histidyl-tRNA(His) + AMP + diphosphate + H(+). This is Histidine--tRNA ligase from Roseobacter denitrificans (strain ATCC 33942 / OCh 114) (Erythrobacter sp. (strain OCh 114)).